The following is a 347-amino-acid chain: MITERQRQILNLIVSLYAKDHTPIGSKSLLDSIQASSATIRNDMKALERLGLIQKEHTSSGRIPSVSGYKYFVENVIQLEEFSQNDLFKVMKAFDGDFYRLSDLFKTAAKSLSELTGLTSFVLNAPQRDQQLVSFEMVILDNHSVLSVITLGTGEVRTNQFILPKSMTEADLAVFSNLVKERLVGKKVIDIHYTLRTEIPQIVQRYFKVTSEVLQLFESIFDDLFKEHLTVAGRKNIFDYATDNLAELYKLFSDDERMLHEIREITNNDEMRAVKFDNDEKFMKNLTIISQKFVIPYRGFGTLTVVGPVEMDYQRTLSVLDLVAKVLTMKLSDYYRYLDGNHYEISK.

Belongs to the HrcA family.

In terms of biological role, negative regulator of class I heat shock genes (grpE-dnaK-dnaJ and groELS operons). Prevents heat-shock induction of these operons. In Lactococcus lactis subsp. cremoris (strain SK11), this protein is Heat-inducible transcription repressor HrcA.